Reading from the N-terminus, the 69-residue chain is Putative membrane protein insertion efficiency factor (69 aa).

The protein belongs to the UPF0161 family.

It is found in the cell inner membrane. Its function is as follows. Could be involved in insertion of integral membrane proteins into the membrane. In Geobacter sulfurreducens (strain ATCC 51573 / DSM 12127 / PCA), this protein is Putative membrane protein insertion efficiency factor.